A 291-amino-acid polypeptide reads, in one-letter code: 3-hydroxy-5-phosphonooxypentane-2,4-dione thiolase (291 aa).

The active-site Schiff-base intermediate with substrate is the lysine 203.

Belongs to the DeoC/FbaB aldolase family. In terms of assembly, homodecamer.

It is found in the cytoplasm. It catalyses the reaction dihydroxyacetone phosphate + acetyl-CoA = 3-hydroxy-2,4-dioxopentyl phosphate + CoA. Involved in the degradation of phospho-AI-2, thereby terminating induction of the lsr operon and closing the AI-2 signaling cycle. Catalyzes the transfer of an acetyl moiety from 3-hydroxy-5-phosphonooxypentane-2,4-dione to CoA to form glycerone phosphate and acetyl-CoA. In Photorhabdus laumondii subsp. laumondii (strain DSM 15139 / CIP 105565 / TT01) (Photorhabdus luminescens subsp. laumondii), this protein is 3-hydroxy-5-phosphonooxypentane-2,4-dione thiolase.